Here is a 149-residue protein sequence, read N- to C-terminus: Ricin B-like lectin (149 aa).

Ser-2 is subject to N-acetylserine. Residues Asp-21, Gly-24, Asn-39, and Asn-47 each contribute to the a carbohydrate site. Residues 110–112 (PNL) are involved in dimerization.

As to quaternary structure, homodimer. Post-translationally, the N-terminus is blocked.

Functionally, lectin specific for terminal, non-reducing N-acetylgalactosamine (Gal-NAc)-containing carbohydrates including N,N'-diacetyllactosediamine/LDN (GalNAcbeta1-4GlcNAc, LacdiNAc). Specific also for carbohydrates containing N-acetylglucosamine (-GlcNAc) or N-acetyllactosamine (-Galbeta1-4GlcNAc) at the reducing end. Agglutinates human blood group A, AB, B and O erythrocytes with a strong preference for group A. Agglutinates bovine erythrocytes with a very low specificity. Binds carbohydrates bivalently, which is required for its biological activity. Exhibits insecticidal activity against the fruit fly D.melanogaster, mosquito A.aegypti, and amoebozoa A.castellanii. Has anti-nutritional activity against Colorado potato beetle L.decemlineata, and against worm C.elegans. Has antiproliferative activity against human leukemic T-cells. Has an immunostimulatory effect on human antigen-presenting dendritic cells, which are subsequently able to induce efficient T-cell immune responses. The chain is Ricin B-like lectin from Clitocybe nebularis (Clouded agaric).